We begin with the raw amino-acid sequence, 225 residues long: RNA-binding protein 24 (225 aa).

In terms of domain architecture, RRM spans 11-88 (TKIFVGGLPY…RKANVNLAYL (78 aa)).

It localises to the nucleus. The protein localises to the cytoplasm. Its function is as follows. Multifunctional RNA-binding protein involved in the regulation of pre-mRNA splicing, mRNA stability and mRNA translation important for cell fate decision and differentiation. Plays a major role in pre-mRNA alternative splicing regulation. Mediates preferentially muscle-specific exon inclusion in numerous mRNAs important for striated cardiac and skeletal muscle cell differentiation. Binds to intronic splicing enhancer (ISE) composed of stretches of GU-rich motifs localized in flanking intron of exon that will be included by alternative splicing. Involved in embryonic stem cell (ESC) transition to cardiac cell differentiation by promoting pre-mRNA alternative splicing events of several pluripotency and/or differentiation genes. Plays a role in the regulation of mRNA stability and mRNA translation to which it is bound. Involved in myogenic differentiation by regulating MYOG levels. Binds to a huge amount of mRNAs. Involved in embryonic heart development and myogenic differentiation of somitic muscle progenitors. The polypeptide is RNA-binding protein 24 (Gallus gallus (Chicken)).